A 185-amino-acid chain; its full sequence is HTH-type transcriptional regulator PuuR (185 aa).

The interval 1-20 (MSDEGLAPGKRLSEIRQQQG) is disordered. One can recognise an HTH cro/C1-type domain in the interval 12–66 (LSEIRQQQGLSQRRAAELSGLTHSAISTIEQDKVSPAISTLQKLLKVYGLSLSEF). The segment at residues 23–42 (QRRAAELSGLTHSAISTIEQ) is a DNA-binding region (H-T-H motif). Residues 111-178 (FETYQPGTTT…TSAGICRIIS (68 aa)) form the Cupin type-2 domain.

It functions in the pathway amine and polyamine degradation; putrescine degradation [regulation]. Functionally, represses puuA, puuD and puuP. The chain is HTH-type transcriptional regulator PuuR (puuR) from Escherichia coli (strain K12).